Here is a 247-residue protein sequence, read N- to C-terminus: ATP synthase subunit a, chloroplastic (247 aa).

Helical transmembrane passes span 38-58, 95-115, 134-154, 199-219, and 220-240; these read QVLITSWVVIVILLGSAIVTV, VPFIGTLFLFIFVSNWSGALL, INTTVALALLTSIAYFYAGLS, LVVVVLVSLVPSVVPIPVMFL, and GLFTSGIQALIFATLAAAYIG.

Belongs to the ATPase A chain family. As to quaternary structure, F-type ATPases have 2 components, CF(1) - the catalytic core - and CF(0) - the membrane proton channel. CF(1) has five subunits: alpha(3), beta(3), gamma(1), delta(1), epsilon(1). CF(0) has four main subunits: a, b, b' and c.

It is found in the plastid. The protein localises to the chloroplast thylakoid membrane. Key component of the proton channel; it plays a direct role in the translocation of protons across the membrane. The chain is ATP synthase subunit a, chloroplastic from Populus trichocarpa (Western balsam poplar).